The sequence spans 176 residues: Ribosome rescue factor SmrB (176 aa).

The Smr domain maps to 97 to 172 (LDMHGMTQQE…GDGALLVLLS (76 aa)).

The protein belongs to the SmrB family. Associates with collided ribosomes, but not with correctly translating polysomes.

Functionally, acts as a ribosome collision sensor. Detects stalled/collided disomes (pairs of ribosomes where the leading ribosome is stalled and a second ribosome has collided with it) and endonucleolytically cleaves mRNA at the 5' boundary of the stalled ribosome. Stalled/collided disomes form a new interface (primarily via the 30S subunits) that binds SmrB. Cleaved mRNA becomes available for tmRNA ligation, leading to ribosomal subunit dissociation and rescue of stalled ribosomes. The protein is Ribosome rescue factor SmrB of Vibrio vulnificus (strain YJ016).